The sequence spans 160 residues: Troponin C, skeletal muscle (160 aa).

Thr-2 bears the N-acetylthreonine mark. 4 EF-hand domains span residues 15–50, 51–86, 91–126, and 127–160; these read EMIAEFKAAFDMFDADGGGDISVKELGTVMRMLGQT, PTKEELDAIIEEVDEDGSGTIDFEEFLVMMVRQMKE, KSEEELAECFRIFDRNADGYIDAEELAEIFRASGEH, and VTEEEIESLMKDGDKNNDGRIDFDEFLKMMEGVQ. Asp-28, Asp-30, Asp-34, Glu-39, Asp-64, Asp-66, Ser-68, Thr-70, Glu-75, Asp-104, Asn-106, Asp-108, Tyr-110, Glu-115, Asp-140, Asn-142, Asp-144, Arg-146, and Glu-151 together coordinate Ca(2+).

The protein belongs to the troponin C family. Fast skeletal muscle.

In terms of biological role, troponin is the central regulatory protein of striated muscle contraction. Tn consists of three components: Tn-I which is the inhibitor of actomyosin ATPase, Tn-T which contains the binding site for tropomyosin and Tn-C. The binding of calcium to Tn-C abolishes the inhibitory action of Tn on actin filaments. The polypeptide is Troponin C, skeletal muscle (Tnnc2) (Mus musculus (Mouse)).